A 185-amino-acid chain; its full sequence is Elongation factor P (185 aa).

It belongs to the elongation factor P family.

The protein resides in the cytoplasm. The protein operates within protein biosynthesis; polypeptide chain elongation. Its function is as follows. Involved in peptide bond synthesis. Stimulates efficient translation and peptide-bond synthesis on native or reconstituted 70S ribosomes in vitro. Probably functions indirectly by altering the affinity of the ribosome for aminoacyl-tRNA, thus increasing their reactivity as acceptors for peptidyl transferase. The protein is Elongation factor P of Alkaliphilus oremlandii (strain OhILAs) (Clostridium oremlandii (strain OhILAs)).